The following is a 449-amino-acid chain: Baeyer-Villiger oxidase GME11358 (449 aa).

This sequence belongs to the questin oxidase family.

It functions in the pathway secondary metabolite biosynthesis. In terms of biological role, baeyer-Villiger oxidase; part of the gene cluster that mediates the biosynthesis of dibenzodioxocinones such as pestalotiollide B, a novel class of inhibitors against cholesterol ester transfer protein (CEPT). The biosynthesis initiates from condensation of acetate and malonate units catalyzed by the non-reducing PKS pks8/GME11356. Pks8/GME11356 lacks a thioesterase (TE) domain, which is important to the cyclizing of the third ring of atrochrysone carboxylic acid, and the esterase GME11355 might play the role of TE and catalyzes the cyclization reaction of the C ring. The lactamase-like protein GME11357 (or other beta-lactamases in Pestalotiopsis microspora) probably hydrolyzes the thioester bond between the ACP of pks8/GME11356 and the intermediate to release atrochrysone carboxylic acid, which is spontaneously dehydrates to form endocrocin anthrone. Endocrocin anthrone is further converted to emodin via the endocrocin intermediate. Emodin is then oxidized by several enzymes such as the Baeyer-Villiger oxidase GME11358, the oxidoreductase GME11367, the short chain dehydrogenase/reductase GME11373, as well as by other oxidoreductases from the cluster, to modify the A and C rings and open the B ring, and finally yield monodictyphenone. The prenyltransferase GME11375 may catalyze the addition reaction between the C5 side chains and the carbon bone of dibenzodioxocinones. The remaining biochemical reactions to the final product dibenzodioxocinones should be methylation catalyzed by methyltransferase GME11366 and reduction and lactonization reaction catalyzed by a series of oxidordeuctases. In Pestalotiopsis microspora, this protein is Baeyer-Villiger oxidase GME11358.